The following is a 259-amino-acid chain: Small ribosomal subunit protein uS2 (259 aa).

It belongs to the universal ribosomal protein uS2 family.

The polypeptide is Small ribosomal subunit protein uS2 (Streptococcus pneumoniae (strain Hungary19A-6)).